The sequence spans 450 residues: Glucose-6-phosphate isomerase (450 aa).

Threonine 39 carries the phosphothreonine modification. The active-site Proton donor is glutamate 291. Active-site residues include histidine 312 and lysine 426.

Belongs to the GPI family.

Its subcellular location is the cytoplasm. It catalyses the reaction alpha-D-glucose 6-phosphate = beta-D-fructose 6-phosphate. Its pathway is carbohydrate biosynthesis; gluconeogenesis. It functions in the pathway carbohydrate degradation; glycolysis; D-glyceraldehyde 3-phosphate and glycerone phosphate from D-glucose: step 2/4. Catalyzes the reversible isomerization of glucose-6-phosphate to fructose-6-phosphate. In Bacillus cereus (strain AH187), this protein is Glucose-6-phosphate isomerase.